A 132-amino-acid polypeptide reads, in one-letter code: Small ribosomal subunit protein uS11 (132 aa).

Belongs to the universal ribosomal protein uS11 family. As to quaternary structure, part of the 30S ribosomal subunit. Interacts with proteins S7 and S18. Binds to IF-3.

In terms of biological role, located on the platform of the 30S subunit, it bridges several disparate RNA helices of the 16S rRNA. Forms part of the Shine-Dalgarno cleft in the 70S ribosome. This is Small ribosomal subunit protein uS11 from Clostridioides difficile (strain 630) (Peptoclostridium difficile).